Consider the following 190-residue polypeptide: Holliday junction branch migration complex subunit RuvA (190 aa).

A domain I region spans residues Met1 to Ile65. Residues Ser66 to His143 are domain II. The tract at residues Pro144–Glu147 is flexible linker. Positions Glu147–Leu190 are domain III.

It belongs to the RuvA family. Homotetramer. Forms an RuvA(8)-RuvB(12)-Holliday junction (HJ) complex. HJ DNA is sandwiched between 2 RuvA tetramers; dsDNA enters through RuvA and exits via RuvB. An RuvB hexamer assembles on each DNA strand where it exits the tetramer. Each RuvB hexamer is contacted by two RuvA subunits (via domain III) on 2 adjacent RuvB subunits; this complex drives branch migration. In the full resolvosome a probable DNA-RuvA(4)-RuvB(12)-RuvC(2) complex forms which resolves the HJ.

It localises to the cytoplasm. In terms of biological role, the RuvA-RuvB-RuvC complex processes Holliday junction (HJ) DNA during genetic recombination and DNA repair, while the RuvA-RuvB complex plays an important role in the rescue of blocked DNA replication forks via replication fork reversal (RFR). RuvA specifically binds to HJ cruciform DNA, conferring on it an open structure. The RuvB hexamer acts as an ATP-dependent pump, pulling dsDNA into and through the RuvAB complex. HJ branch migration allows RuvC to scan DNA until it finds its consensus sequence, where it cleaves and resolves the cruciform DNA. This is Holliday junction branch migration complex subunit RuvA from Wolbachia pipientis wMel.